Consider the following 473-residue polypeptide: Maltose fermentation regulatory protein MAL63 (473 aa).

The zn(2)-C6 fungal-type DNA-binding region spans 8–34 (CDCCRVRRVKCDRNKPCNRCIQRNLNC). A Nuclear localization signal motif is present at residues 41–49 (KKRGPKSIR).

The protein belongs to the MAL13 family.

It localises to the nucleus. Its function is as follows. Regulates the coordinate transcription of structural MAL6S (maltase) and MAL6T (maltose permease) genes. In Saccharomyces cerevisiae (Baker's yeast), this protein is Maltose fermentation regulatory protein MAL63 (MAL63).